A 382-amino-acid polypeptide reads, in one-letter code: Pectinesterase (382 aa).

The N-terminal stretch at 1-16 (MKIIVLLLLAVVLASA) is a signal peptide. Cys-153 and Cys-164 are disulfide-bonded. Asn-179 carries N-linked (GlcNAc...) asparagine glycosylation. Gln-193 contacts substrate. Asp-216 functions as the Proton donor in the catalytic mechanism. The active-site Nucleophile is the Asp-242. Substrate contacts are provided by Arg-306 and Trp-308. N-linked (GlcNAc...) asparagine glycans are attached at residues Asn-340 and Asn-376.

This sequence belongs to the pectinesterase family. In terms of tissue distribution, expressed throughout the midgut with particularly strong expression in the ventriculus.

It localises to the secreted. It catalyses the reaction [(1-&gt;4)-alpha-D-galacturonosyl methyl ester](n) + n H2O = [(1-&gt;4)-alpha-D-galacturonosyl](n) + n methanol + n H(+). It functions in the pathway glycan metabolism; pectin degradation; 2-dehydro-3-deoxy-D-gluconate from pectin: step 1/5. Pectinesterase which probably plays an important role in the digestion of plant cell walls. The polypeptide is Pectinesterase (Sitophilus oryzae (Rice weevil)).